The primary structure comprises 859 residues: Photoactivated adenylate cyclase subunit beta-like protein ST- (859 aa).

The 94-residue stretch at 56–149 folds into the BLUF 1 domain; the sequence is LRRLMYLSKS…GRMYGDWHMK (94 aa). Residues 420-444 are disordered; it reads RPPIFDDTPKSNPRPRTPGYGGRQR. The region spanning 471–563 is the BLUF 2 domain; the sequence is LTTLTYISQA…RVYTSEWTLT (93 aa). The interval 814–859 is disordered; the sequence is ARSGEQPLTEPEQAKPDFRVSPGRDRHGVSGRRSNSSQGKGSIQVG. Basic and acidic residues predominate over residues 825–841; sequence EQAKPDFRVSPGRDRHG. Residues 845-859 are compositionally biased toward polar residues; that stretch reads RRSNSSQGKGSIQVG.

As to quaternary structure, heterotetramer of two alpha and two beta subunits.

It localises to the cell projection. It is found in the cilium. The protein resides in the flagellum. In Euglena gracilis, this protein is Photoactivated adenylate cyclase subunit beta-like protein ST-.